The primary structure comprises 432 residues: Transcriptional adapter 3 (432 aa).

K21 is covalently cross-linked (Glycyl lysine isopeptide (Lys-Gly) (interchain with G-Cter in SUMO2)). A coiled-coil region spans residues 40 to 69; it reads IEELDTLQLELETLLSSASRRLRVLEAETQ. Positions 87 to 127 are disordered; sequence ARDHELGAPPKHGKPKKQKLEGKTGHGPGPGPGRPKSKNVQ. K129 is covalently cross-linked (Glycyl lysine isopeptide (Lys-Gly) (interchain with G-Cter in SUMO2)). Residues 272 to 319 form a disordered region; that stretch reads NIISPMEDSPIPDMSGKESGADGASTSPRNQNKPFSVPHTKSLESRIK. 2 positions are modified to phosphoserine: S280 and S298. Over residues 295 to 305 the composition is skewed to polar residues; that stretch reads ASTSPRNQNKP. Residues 367-407 adopt a coiled-coil conformation; that stretch reads LLRLAKEEVSRQELRQRVRMADNEVMDAFRKIMAARQKKRT. Position 418 is an N6-acetyllysine (K418).

The protein belongs to the NGG1 family. The PCAF complex is composed of a number of TBP-associated factors (TAFS), such as TAF5, TAF5L, TAF6, TAF6L, TAF9, TAF10 and TAF12, PCAF, and also PCAF-associated factors (PAFs), such as TADA2L/ADA2, TADA3L/ADA3 and SPT3. Interacts directly with TADA2L and PCAF and also with the high-risk HPV oncoprotein E6. Component of the STAGA transcription coactivator-HAT complex, at least composed of SUPT3H, GCN5L2, TAF5L, TAF6L, SUPT7L, TADA3L, TAD1L, TAF10, TAF12, TRRAP and TAF9. Component of the TFTC-HAT complex. Component of the ADA2A-containing complex (ATAC), composed of KAT14, KAT2A, TADA2L, TADA3L, ZZ3, MBIP, WDR5, YEATS2, CCDC101 and DR1.

It localises to the nucleus. Its function is as follows. Functions as a component of the PCAF complex. The PCAF complex is capable of efficiently acetylating histones in a nucleosomal context. The PCAF complex could be considered as the human version of the yeast SAGA complex. Also known as a coactivator for p53/TP53-dependent transcriptional activation. Component of the ATAC complex, a complex with histone acetyltransferase activity on histones H3 and H4. In Rattus norvegicus (Rat), this protein is Transcriptional adapter 3 (Tada3).